The chain runs to 184 residues: MGVIQTLDRLMTNPMPEGRVEDILRPEGENPLLEKGYVTTSVDALLNWARTGSMWPMTFGLACCAVEMMHAGASRLDLDRYGVVFRPSPRQSDVMIVAGTLVNKMAPALRKVYDQMPDPKWVISMGSCANGGGYYHYSYSVVRGCDRIVPVDIYVPGCPPTAEALVYGILQLQKKIWRTQTIAR.

Positions 63, 64, 128, and 158 each coordinate [4Fe-4S] cluster.

It belongs to the complex I 20 kDa subunit family. As to quaternary structure, NDH-1 is composed of 14 different subunits. Subunits NuoB, C, D, E, F, and G constitute the peripheral sector of the complex. [4Fe-4S] cluster is required as a cofactor.

Its subcellular location is the cell inner membrane. It catalyses the reaction a quinone + NADH + 5 H(+)(in) = a quinol + NAD(+) + 4 H(+)(out). In terms of biological role, NDH-1 shuttles electrons from NADH, via FMN and iron-sulfur (Fe-S) centers, to quinones in the respiratory chain. The immediate electron acceptor for the enzyme in this species is believed to be ubiquinone. Couples the redox reaction to proton translocation (for every two electrons transferred, four hydrogen ions are translocated across the cytoplasmic membrane), and thus conserves the redox energy in a proton gradient. This is NADH-quinone oxidoreductase subunit B from Xanthomonas oryzae pv. oryzae (strain MAFF 311018).